Here is a 292-residue protein sequence, read N- to C-terminus: AhcY transcriptional activator HvrB (292 aa).

Positions 10-67 (PPLTALRAFAATASEGGFSAAARKLNVTHAAIAQQVRALEADLDVPLVWRDGKHLHLT) constitute an HTH lysR-type domain. The H-T-H motif DNA-binding region spans 27–46 (FSAAARKLNVTHAAIAQQVR).

It belongs to the LysR transcriptional regulatory family.

Functionally, functions as a low-light activator of ahcY expression (gene for S-adenosyl-L-homocysteine hydrolase) and as a high-light activator of an uncharacterized 21.6 kDa protein in the ahcY-hvrB intergenic region (orf5). It is also a negative regulator of its own expression. The chain is AhcY transcriptional activator HvrB (hvrB) from Rhodobacter capsulatus (strain ATCC BAA-309 / NBRC 16581 / SB1003).